A 365-amino-acid chain; its full sequence is Ubiquitin carboxyl-terminal hydrolase 4 (365 aa).

A lipid anchor (N-myristoyl glycine) is attached at Gly2. Positions 23-362 constitute a USP domain; it reads FGFENFGNTC…HGYILLYESL (340 aa). Residue Cys32 is the Nucleophile of the active site. The Bipartite nuclear localization signal motif lies at 81–98; that stretch reads KKKTGVIAPKRFVQRLKK. The Proton acceptor role is filled by His310.

This sequence belongs to the peptidase C19 family. As to expression, constitutively and ubiquitously expressed.

It localises to the nucleus. It carries out the reaction Thiol-dependent hydrolysis of ester, thioester, amide, peptide and isopeptide bonds formed by the C-terminal Gly of ubiquitin (a 76-residue protein attached to proteins as an intracellular targeting signal).. In terms of biological role, recognizes and hydrolyzes the peptide bond at the C-terminal Gly of ubiquitin. Involved in the processing of poly-ubiquitin precursors as well as that of ubiquitinated proteins. Required for the correct development of pollen. The polypeptide is Ubiquitin carboxyl-terminal hydrolase 4 (UBP4) (Arabidopsis thaliana (Mouse-ear cress)).